We begin with the raw amino-acid sequence, 1075 residues long: Disheveled-associated activator of morphogenesis 2 (1075 aa).

A GBD/FH3 domain is found at 40–416; that stretch reads VPIPPTEELN…QIVLQDERGD (377 aa). A coiled-coil region spans residues 437-517; that stretch reads NENEVKQWRD…VAQLNEYSQG (81 aa). 3 disordered regions span residues 517-611, 1006-1025, and 1048-1075; these read GGSI…IPQP, KEQREKERRQKKAKAGSISE, and SKLKRNRKRSGNQGLETSRERVVTKLNY. Pro residues predominate over residues 523-532; that stretch reads PAPPPPPPGG. Residues 533–544 are compositionally biased toward low complexity; it reads PLALSSALSSAL. The span at 550-581 shows a compositional bias: pro residues; that stretch reads PPLPPPLPFSSCPPPPAPPPPPGGPPPPPGAP. One can recognise an FH2 domain in the interval 605-1075; sequence KKSIPQPSHP…RERVVTKLNY (471 aa). The region spanning 1025-1075 is the DAD domain; sequence EETGEFDDLVSALRSGEVFDKDLSKLKRNRKRSGNQGLETSRERVVTKLNY. Residues 1064-1075 show a composition bias toward basic and acidic residues; the sequence is TSRERVVTKLNY.

The protein belongs to the formin homology family. Expressed in progenitor populations of the embryonic spinal cord (at protein level).

In terms of biological role, key regulator of the Wnt signaling pathway, which is required for various processes during development, such as dorsal patterning, determination of left/right symmetry or myelination in the central nervous system. Acts downstream of Wnt ligands and upstream of beta-catenin (CTNNB1). Required for canonical Wnt signaling pathway during patterning in the dorsal spinal cord by promoting the aggregation of Disheveled (Dvl) complexes, thereby clustering and formation of Wnt receptor signalosomes and potentiating Wnt activity. During dorsal patterning of the spinal cord, inhibits oligodendrocytes differentiation via interaction with PIP5K1A. Also regulates non-canonical Wnt signaling pathway. Acts downstream of PITX2 in the developing gut and is required for left/right asymmetry within dorsal mesentery: affects mesenchymal condensation by lengthening cadherin-based junctions through WNT5A and non-canonical Wnt signaling, inducing polarized condensation in the left dorsal mesentery necessary to initiate gut rotation. Together with DAAM1, required for myocardial maturation and sarcomere assembly. The chain is Disheveled-associated activator of morphogenesis 2 from Gallus gallus (Chicken).